A 369-amino-acid polypeptide reads, in one-letter code: MRN complex-interacting protein (369 aa).

Ser115 is modified (phosphoserine). 3 disordered regions span residues 122–150 (GGGVCFNSQPSSETEKPDPPFSTGLPRKR), 209–245 (PSFTQDRAGLAGKGRESSREDLDTMELVPRGEPPCPA), and 282–317 (AQAEQGAPRAQTPREGGLCRLPGARQSPQTTHTPMP). Positions 148–151 (RKRK) match the Nuclear localization signal (NLS) motif. Positions 221-230 (KGRESSREDL) are enriched in basic and acidic residues. A necessary for the association with the MRN complex region spans residues 223 to 259 (RESSREDLDTMELVPRGEPPCPAQQVRTMSKWEQCLG).

The protein belongs to the MRNIP family. In terms of assembly, associates with the MRE11-RAD50-NBN (MRN) damage-sensing complex; this association is constitutive. Interacts with MRE11. Interacts with NBN. Interacts with RAD50. Phosphorylated; phosphorylation is constitutive and occurs in the absence of any DNA-damaging stimulus. Phosphorylation on Ser-115 is necessary for its nuclear retention.

The protein localises to the nucleus. It localises to the nucleoplasm. Functionally, plays a role in the cellular response to DNA damage and the maintenance of genome stability through its association with the MRN damage-sensing complex. Promotes chromatin loading and activity of the MRN complex to facilitate subsequent ATM-mediated DNA damage response signaling and DNA repair. This Bos taurus (Bovine) protein is MRN complex-interacting protein.